The sequence spans 160 residues: Transcription antitermination protein NusB (160 aa).

This sequence belongs to the NusB family.

Its function is as follows. Involved in transcription antitermination. Required for transcription of ribosomal RNA (rRNA) genes. Binds specifically to the boxA antiterminator sequence of the ribosomal RNA (rrn) operons. The chain is Transcription antitermination protein NusB from Sinorhizobium medicae (strain WSM419) (Ensifer medicae).